A 295-amino-acid chain; its full sequence is UDP-N-acetylenolpyruvoylglucosamine reductase (295 aa).

The FAD-binding PCMH-type domain maps to 23 to 188 (KVGGPADFLA…ISAKFALKPG (166 aa)). Arg167 is a catalytic residue. Catalysis depends on Ser217, which acts as the Proton donor. Residue Glu287 is part of the active site.

It belongs to the MurB family. FAD serves as cofactor.

Its subcellular location is the cytoplasm. It catalyses the reaction UDP-N-acetyl-alpha-D-muramate + NADP(+) = UDP-N-acetyl-3-O-(1-carboxyvinyl)-alpha-D-glucosamine + NADPH + H(+). The protein operates within cell wall biogenesis; peptidoglycan biosynthesis. Its function is as follows. Cell wall formation. The protein is UDP-N-acetylenolpyruvoylglucosamine reductase of Streptococcus pyogenes serotype M6 (strain ATCC BAA-946 / MGAS10394).